A 116-amino-acid chain; its full sequence is NADH-ubiquinone oxidoreductase chain 3 (116 aa).

3 helical membrane-spanning segments follow: residues leucine 3–phenylalanine 23, phenylalanine 56–leucine 76, and leucine 87–tryptophan 107.

This sequence belongs to the complex I subunit 3 family.

The protein resides in the mitochondrion membrane. It carries out the reaction a ubiquinone + NADH + 5 H(+)(in) = a ubiquinol + NAD(+) + 4 H(+)(out). Functionally, core subunit of the mitochondrial membrane respiratory chain NADH dehydrogenase (Complex I) that is believed to belong to the minimal assembly required for catalysis. Complex I functions in the transfer of electrons from NADH to the respiratory chain. The immediate electron acceptor for the enzyme is believed to be ubiquinone. This chain is NADH-ubiquinone oxidoreductase chain 3 (MT-ND3), found in Gadus morhua (Atlantic cod).